Reading from the N-terminus, the 1697-residue chain is Neurexin-3a (1697 aa).

The N-terminal stretch at 1–23 (MNFFRFPVQLQLLISTVLGPCLG) is a signal peptide. The 175-residue stretch at 24–198 (LEFTGLQGQW…RVRMDIEGIC (175 aa)) folds into the Laminin G-like 1 domain. Residues 24 to 1622 (LEFTGLQGQW…EVVRESSSTT (1599 aa)) lie on the Extracellular side of the membrane. Residues 194–231 (IEGICMENPCENGGTCSVVDGEPLCDCSKTEYVGRFCN) form the EGF-like 1 domain. 3 disulfides stabilise this stretch: cysteine 198–cysteine 209, cysteine 203–cysteine 218, and cysteine 220–cysteine 230. Laminin G-like domains are found at residues 258–455 (VATF…VFKC) and 462–654 (DPIS…KPSC). Ca(2+) is bound by residues aspartate 304, leucine 321, and methionine 389. Cystine bridges form between cysteine 419/cysteine 455, cysteine 625/cysteine 654, cysteine 662/cysteine 673, cysteine 667/cysteine 682, and cysteine 684/cysteine 694. The EGF-like 2 domain maps to 658 to 695 (SGKQCDSYPCKNKGLCKEGWNRFICDCTGTGYWSRTCE). Laminin G-like domains are found at residues 700 to 872 (ILSY…IDFC) and 886 to 1061 (DPVT…ERGC). Cystine bridges form between cysteine 1033–cysteine 1061, cysteine 1077–cysteine 1088, cysteine 1082–cysteine 1097, and cysteine 1099–cysteine 1109. The EGF-like 3 domain occupies 1073–1110 (PSTTCQEDSCANMGICIQQWENYTCDCSMTSYTGTHCN). One can recognise a Laminin G-like 6 domain in the interval 1114-1314 (TTYIFGKGGG…NPNIKINGSV (201 aa)). Disordered stretches follow at residues 1345–1366 (TMSTTTTRKHRTPPTIQTTDDM), 1442–1479 (LSDGGSDDCGDDDDDDDDDGLMISGYGSGEAYDSNLPP), and 1520–1557 (PNKVFDSGRTTTASFSPKLSRSTTTSTPPKLPAGKMNH). Acidic residues predominate over residues 1446-1461 (GSDDCGDDDDDDDDDG). Polar residues predominate over residues 1527 to 1547 (GRTTTASFSPKLSRSTTTSTP). Residues 1623 to 1643 (GMVVGIVAAAALCILILLYAM) traverse the membrane as a helical segment. The Cytoplasmic segment spans residues 1644–1697 (YKYRNRDEGSYQVDETRNYITNSAQSNGAVMKDKQQSTKSGNKKQKNKDKEYYV). The tract at residues 1665–1697 (NSAQSNGAVMKDKQQSTKSGNKKQKNKDKEYYV) is disordered.

This sequence belongs to the neurexin family.

Its subcellular location is the membrane. Its function is as follows. Neuronal cell surface protein that may be involved in cell recognition and cell adhesion. This Danio rerio (Zebrafish) protein is Neurexin-3a (nrxn3a).